Here is a 135-residue protein sequence, read N- to C-terminus: Proteasome assembly chaperone 3 (135 aa).

This sequence belongs to the PSMG3 family.

Functionally, chaperone protein which promotes assembly of the 20S proteasome. May cooperate with psmg1-psmg2 heterodimers to orchestrate the correct assembly of proteasomes. The chain is Proteasome assembly chaperone 3 (psmg3) from Nematostella vectensis (Starlet sea anemone).